Reading from the N-terminus, the 368-residue chain is MNEITHRTKTRPVKVGNLTIGGNNELIIQSMTTTKTHDVEATVAEIKRLEEAGCQIVRVAVPDERAANAIADIKKQINIPLVADIHFDYRLALKAIEGGIDKVRINPGNIGRRHKVEAVVNAAKERGIPIRIGVNAGSLERHILEKYGYPTADGMVESALHHIKILEDLDFHDIIVSMKASDVNLAIEAYEKAARAFDYPLHLGITESGTLFAGTVKSAAGLGAILSKGIGNTLRISLSADPVEEVKVARELLKSFGLASNAATLISCPTCGRIEIDLISIANEVEEYISTLKVPIKVAVLGCAVNGPGEAREADIGIAGARGEGLLFRKGKVVRKVPEETMVEELKKEIDVIAAEMAENQEKEKQEQ.

Residues Cys-268, Cys-271, Cys-303, and Glu-310 each coordinate [4Fe-4S] cluster.

This sequence belongs to the IspG family. Requires [4Fe-4S] cluster as cofactor.

It catalyses the reaction (2E)-4-hydroxy-3-methylbut-2-enyl diphosphate + oxidized [flavodoxin] + H2O + 2 H(+) = 2-C-methyl-D-erythritol 2,4-cyclic diphosphate + reduced [flavodoxin]. It functions in the pathway isoprenoid biosynthesis; isopentenyl diphosphate biosynthesis via DXP pathway; isopentenyl diphosphate from 1-deoxy-D-xylulose 5-phosphate: step 5/6. Functionally, converts 2C-methyl-D-erythritol 2,4-cyclodiphosphate (ME-2,4cPP) into 1-hydroxy-2-methyl-2-(E)-butenyl 4-diphosphate. The protein is 4-hydroxy-3-methylbut-2-en-1-yl diphosphate synthase (flavodoxin) of Bacillus cytotoxicus (strain DSM 22905 / CIP 110041 / 391-98 / NVH 391-98).